The following is a 128-amino-acid chain: RutC family protein BUsg_359 (128 aa).

Belongs to the RutC family.

In Buchnera aphidicola subsp. Schizaphis graminum (strain Sg), this protein is RutC family protein BUsg_359.